A 79-amino-acid chain; its full sequence is Acyl carrier protein (79 aa).

In terms of domain architecture, Carrier spans 2–77; it reads SDIEARVKKI…LAIDYAKNNV (76 aa). Ser-37 carries the O-(pantetheine 4'-phosphoryl)serine modification.

It belongs to the acyl carrier protein (ACP) family. In terms of processing, 4'-phosphopantetheine is transferred from CoA to a specific serine of apo-ACP by AcpS. This modification is essential for activity because fatty acids are bound in thioester linkage to the sulfhydryl of the prosthetic group.

The protein resides in the cytoplasm. Its pathway is lipid metabolism; fatty acid biosynthesis. In terms of biological role, carrier of the growing fatty acid chain in fatty acid biosynthesis. This Leptothrix cholodnii (strain ATCC 51168 / LMG 8142 / SP-6) (Leptothrix discophora (strain SP-6)) protein is Acyl carrier protein.